Reading from the N-terminus, the 288-residue chain is Glutamate racemase (288 aa).

A disordered region spans residues 1–21 (MAIARQDVNISSPEATTSDAQ). Residues 8–21 (VNISSPEATTSDAQ) are compositionally biased toward polar residues. Residues 32 to 33 (DS) and 64 to 65 (YG) contribute to the substrate site. Cys-96 acts as the Proton donor/acceptor in catalysis. Position 97 to 98 (97 to 98 (NT)) interacts with substrate. Catalysis depends on Cys-209, which acts as the Proton donor/acceptor. Residue 210 to 211 (TH) participates in substrate binding.

The protein belongs to the aspartate/glutamate racemases family.

The catalysed reaction is L-glutamate = D-glutamate. Its pathway is cell wall biogenesis; peptidoglycan biosynthesis. Provides the (R)-glutamate required for cell wall biosynthesis. In Proteus mirabilis (strain HI4320), this protein is Glutamate racemase.